The primary structure comprises 570 residues: Urease subunit alpha (570 aa).

The Urease domain occupies 131 to 570; that stretch reads GGMDSHIHFI…LPMAQRYFLF (440 aa). 3 residues coordinate Ni(2+): histidine 136, histidine 138, and lysine 219. Lysine 219 bears the N6-carboxylysine mark. A substrate-binding site is contributed by histidine 221. Positions 248 and 274 each coordinate Ni(2+). The Proton donor role is filled by histidine 322. Residue aspartate 362 coordinates Ni(2+).

Belongs to the metallo-dependent hydrolases superfamily. Urease alpha subunit family. As to quaternary structure, heterotrimer of UreA (gamma), UreB (beta) and UreC (alpha) subunits. Three heterotrimers associate to form the active enzyme. Ni cation serves as cofactor. Post-translationally, carboxylation allows a single lysine to coordinate two nickel ions.

The protein resides in the cytoplasm. The enzyme catalyses urea + 2 H2O + H(+) = hydrogencarbonate + 2 NH4(+). The protein operates within nitrogen metabolism; urea degradation; CO(2) and NH(3) from urea (urease route): step 1/1. In Sinorhizobium fredii (strain NBRC 101917 / NGR234), this protein is Urease subunit alpha.